Consider the following 349-residue polypeptide: Nicotinate-nucleotide--dimethylbenzimidazole phosphoribosyltransferase (349 aa).

The disordered stretch occupies residues 1–20 (MEFATVSPPDPGTAAAARAR). Glu-313 functions as the Proton acceptor in the catalytic mechanism.

It belongs to the CobT family.

The enzyme catalyses 5,6-dimethylbenzimidazole + nicotinate beta-D-ribonucleotide = alpha-ribazole 5'-phosphate + nicotinate + H(+). It participates in nucleoside biosynthesis; alpha-ribazole biosynthesis; alpha-ribazole from 5,6-dimethylbenzimidazole: step 1/2. Its function is as follows. Catalyzes the synthesis of alpha-ribazole-5'-phosphate from nicotinate mononucleotide (NAMN) and 5,6-dimethylbenzimidazole (DMB). In Mycolicibacterium paratuberculosis (strain ATCC BAA-968 / K-10) (Mycobacterium paratuberculosis), this protein is Nicotinate-nucleotide--dimethylbenzimidazole phosphoribosyltransferase.